Here is a 95-residue protein sequence, read N- to C-terminus: Large ribosomal subunit protein bL27 (95 aa).

Positions 1–12 are excised as a propeptide; sequence MLLIKKINLQFF. A disordered region spans residues 17–37; the sequence is GVGSTKNGRDSNPKYLGAKKS.

Belongs to the bacterial ribosomal protein bL27 family. Post-translationally, the N-terminus is cleaved by ribosomal processing cysteine protease Prp.

This Malacoplasma penetrans (strain HF-2) (Mycoplasma penetrans) protein is Large ribosomal subunit protein bL27.